Consider the following 330-residue polypeptide: DNA-directed RNA polymerase I subunit RPA43 (330 aa).

The disordered stretch occupies residues 251-330; it reads ADVTDVTPQE…ANFESPKKRQ (80 aa). Phosphoserine is present on residues Ser-306, Ser-318, and Ser-325. Positions 317–330 are enriched in basic and acidic residues; that stretch reads HSEEANFESPKKRQ.

Belongs to the eukaryotic RPA43 RNA polymerase subunit family. As to quaternary structure, component of the RNA polymerase I (Pol I) complex consisting of 13 subunits: a ten-subunit catalytic core composed of POLR1A/RPA1, POLR1B/RPA2, POLR1C/RPAC1, POLR1D/RPAC2, POLR1H/RPA12, POLR2E/RPABC1, POLR2F/RPABC2, POLR2H/RPABC3, POLR2K/RPABC4 and POLR2L/RPABC5; a mobile stalk subunit POLR1F/RPA43 protruding from the core and additional subunits homologous to general transcription factors POLR1E/RPA49 and POLR1G/RPA34. Interacts with RRN3/TIF-IA. Interacts with RRN3/TIF-IA. Widely expressed.

The protein resides in the nucleus. The protein localises to the nucleolus. In terms of biological role, component of RNA polymerase I (Pol I), a DNA-dependent RNA polymerase which synthesizes ribosomal RNA precursors using the four ribonucleoside triphosphates as substrates. Through its association with RRN3/TIF-IA may be involved in recruitment of Pol I to rDNA promoters. In Mus musculus (Mouse), this protein is DNA-directed RNA polymerase I subunit RPA43.